The chain runs to 132 residues: Fatty acid-binding protein, brain (132 aa).

Valine 2 bears the N-acetylvaline mark. 127–129 is an a fatty acid binding site; the sequence is RHY.

The protein belongs to the calycin superfamily. Fatty-acid binding protein (FABP) family. In terms of tissue distribution, expressed in brain and other neural tissues.

It is found in the cytoplasm. In terms of biological role, B-FABP could be involved in the transport of a so far unknown hydrophobic ligand with potential morphogenic activity during CNS development. It is required for the establishment of the radial glial fiber system in developing brain, a system that is necessary for the migration of immature neurons to establish cortical layers. This Homo sapiens (Human) protein is Fatty acid-binding protein, brain (FABP7).